Reading from the N-terminus, the 142-residue chain is Holo-[acyl-carrier-protein] synthase (142 aa).

Asp-8 and Glu-57 together coordinate Mg(2+).

The protein belongs to the P-Pant transferase superfamily. AcpS family. Mg(2+) is required as a cofactor.

Its subcellular location is the cytoplasm. It carries out the reaction apo-[ACP] + CoA = holo-[ACP] + adenosine 3',5'-bisphosphate + H(+). In terms of biological role, transfers the 4'-phosphopantetheine moiety from coenzyme A to a Ser of acyl-carrier-protein. This is Holo-[acyl-carrier-protein] synthase from Maricaulis maris (strain MCS10) (Caulobacter maris).